The primary structure comprises 451 residues: Cyclin-dependent kinase 18 (451 aa).

Residues Ser12, Ser51, Ser66, Ser75, and Ser109 each carry the phosphoserine modification. The Protein kinase domain occupies 121–402 (YVKLDKLGEG…AEAALNHPYF (282 aa)). ATP-binding positions include 127–135 (LGEGTYATV) and Lys150. Asp242 functions as the Proton acceptor in the catalytic mechanism. A phosphoserine mark is found at Ser417 and Ser420.

Belongs to the protein kinase superfamily. CMGC Ser/Thr protein kinase family. CDC2/CDKX subfamily. In terms of tissue distribution, in brain, kidney, intestine and at a much lower level, in fetal tissues.

The catalysed reaction is L-seryl-[protein] + ATP = O-phospho-L-seryl-[protein] + ADP + H(+). It carries out the reaction L-threonyl-[protein] + ATP = O-phospho-L-threonyl-[protein] + ADP + H(+). Functionally, may play a role in signal transduction cascades in terminally differentiated cells. This Mus musculus (Mouse) protein is Cyclin-dependent kinase 18 (Cdk18).